A 584-amino-acid polypeptide reads, in one-letter code: 2-succinyl-5-enolpyruvyl-6-hydroxy-3-cyclohexene-1-carboxylate synthase (584 aa).

It belongs to the TPP enzyme family. MenD subfamily. As to quaternary structure, homodimer. Requires Mg(2+) as cofactor. The cofactor is Mn(2+). Thiamine diphosphate serves as cofactor.

It carries out the reaction isochorismate + 2-oxoglutarate + H(+) = 5-enolpyruvoyl-6-hydroxy-2-succinyl-cyclohex-3-ene-1-carboxylate + CO2. The protein operates within quinol/quinone metabolism; 1,4-dihydroxy-2-naphthoate biosynthesis; 1,4-dihydroxy-2-naphthoate from chorismate: step 2/7. It participates in quinol/quinone metabolism; menaquinone biosynthesis. Functionally, catalyzes the thiamine diphosphate-dependent decarboxylation of 2-oxoglutarate and the subsequent addition of the resulting succinic semialdehyde-thiamine pyrophosphate anion to isochorismate to yield 2-succinyl-5-enolpyruvyl-6-hydroxy-3-cyclohexene-1-carboxylate (SEPHCHC). This is 2-succinyl-5-enolpyruvyl-6-hydroxy-3-cyclohexene-1-carboxylate synthase from Bacillus thuringiensis subsp. konkukian (strain 97-27).